Consider the following 446-residue polypeptide: Maltoporin (446 aa).

Positions 1–25 are cleaved as a signal peptide; that stretch reads MMITLRKLPLAVAVAAGVMSAQAMA.

Belongs to the porin LamB (TC 1.B.3) family. As to quaternary structure, homotrimer formed of three 18-stranded antiparallel beta-barrels, containing three independent channels.

It localises to the cell outer membrane. The catalysed reaction is beta-maltose(in) = beta-maltose(out). Involved in the transport of maltose and maltodextrins. The polypeptide is Maltoporin (Escherichia coli O7:K1 (strain IAI39 / ExPEC)).